A 169-amino-acid chain; its full sequence is MQDLLFEYKRTLKQTRIQYKPLAEADESVLSAEELKDKKIIRNMITDLEYVTEWLEKGRQPGIRRAIDRRDVYQRLMIKDPRIIESFSSAMMFEPDGQVSEEDRDRIREALALLTDREKEMFLLHKVECFSYERIADLLGVKKSTVQTTIKRASLKMQRQQEEMNRSLA.

Residues Y132–M157 constitute a DNA-binding region (H-T-H motif).

Functionally, positive regulatory protein that acts at the late promoter PL. In Bacillus subtilis (strain 168), this protein is Positive control factor (xpf).